The sequence spans 94 residues: MNLANLQLFAHKKGGGSTSNGRDSQAKRLGAKAADGQTVSGGSILYRQRGTHIYPGANVGRGGDDTLFAKVEGVVRFERKGRDKKQVSVYPIAK.

The propeptide occupies 1–9 (MNLANLQLF). The interval 11 to 33 (HKKGGGSTSNGRDSQAKRLGAKA) is disordered.

It belongs to the bacterial ribosomal protein bL27 family. In terms of processing, the N-terminus is cleaved by ribosomal processing cysteine protease Prp.

The protein is Large ribosomal subunit protein bL27 of Streptococcus agalactiae serotype V (strain ATCC BAA-611 / 2603 V/R).